Consider the following 273-residue polypeptide: Sulfur carrier protein FdhD (273 aa).

Residue C124 is the Cysteine persulfide intermediate of the active site. Residue 263–268 (FCRQSR) participates in Mo-bis(molybdopterin guanine dinucleotide) binding.

The protein belongs to the FdhD family.

The protein resides in the cytoplasm. In terms of biological role, required for formate dehydrogenase (FDH) activity. Acts as a sulfur carrier protein that transfers sulfur from IscS to the molybdenum cofactor prior to its insertion into FDH. This chain is Sulfur carrier protein FdhD, found in Acinetobacter baylyi (strain ATCC 33305 / BD413 / ADP1).